A 347-amino-acid chain; its full sequence is Coproporphyrinogen-III oxidase, aerobic 2 (347 aa).

A disordered region spans residues 1 to 31; sequence MGRHSDNSLQESANHTVLLTSPTNTIPKDSR. The span at 7 to 31 shows a compositional bias: polar residues; it reads NSLQESANHTVLLTSPTNTIPKDSR. Positions 75–84 are important for dimerization; the sequence is VIREGRVFEQ. S119 lines the substrate pocket. The active-site Proton donor is the H133. Residues 135–137 and 305–310 contribute to the substrate site; these read NYR and KGRTES. The interval 287–322 is important for dimerization; sequence YVEFNLVYDRGTVFGLQTKGRTESILMSLPPLARWE.

It belongs to the aerobic coproporphyrinogen-III oxidase family. As to quaternary structure, homodimer.

The protein localises to the cytoplasm. It catalyses the reaction coproporphyrinogen III + O2 + 2 H(+) = protoporphyrinogen IX + 2 CO2 + 2 H2O. The protein operates within porphyrin-containing compound metabolism; protoporphyrin-IX biosynthesis; protoporphyrinogen-IX from coproporphyrinogen-III (O2 route): step 1/1. Functionally, key enzyme in heme biosynthesis. Catalyzes the oxidative decarboxylation of propionic acid side chains of rings A and B of coproporphyrinogen III. This chain is Coproporphyrinogen-III oxidase, aerobic 2, found in Nostoc sp. (strain PCC 7120 / SAG 25.82 / UTEX 2576).